A 280-amino-acid chain; its full sequence is Transcription factor MYB46 (280 aa).

HTH myb-type domains are found at residues 15–67 and 68–122; these read VKKM…INYL and RPDL…KKRL. 2 DNA-binding regions (H-T-H motif) span residues 43 to 67 and 95 to 118; these read WSDVAKNAGLQRCGKSCRLRWINYL and WSQIAARLPGRTDNEIKNFWNSTI. A disordered region spans residues 129–150; it reads SNLINNSSSSPNTASDSSSNSA.

As to expression, expressed at low levels in stems and siliques, specifically in xylem.

It localises to the nucleus. Transcription activator. Involved in the regulation of secondary wall biosynthesis in fibers and vessels. Transcription activator of the mannan synthase CSLA9 that recognizes and binds to the DNA consensus sequence 5'-[AG][GT]T[AT]GGT[GA]-3' cis-regulatory element of CSLA9 promoter. Transcription factor that acts as a molecular switch in the NAC012/SND1-mediated transcriptional network regulating secondary wall biosynthesis. Is directly activated by NAC012/SND1. Functions redundantly with MYB83 in the transcriptional regulatory cascade leading to secondary wall formation in fibers and vessels. Transcription activator that binds to the DNA consensus sequence 5'-ACC[AT]A[AC][TC]-3', designated as the secondary wall MYB-responsive element (SMRE). Regulates directly numerous transcription factors and a number of genes involved in secondary wall biosynthesis that contain SMRE elements in their promoters. Is an obligate component of the transcriptional regulatory complex toward the commitment of secondary wall cellulose synthesis. Is required for functional expression of the three secondary wall CESA genes, CESA4, CESA7 and CESA8. The polypeptide is Transcription factor MYB46 (Arabidopsis thaliana (Mouse-ear cress)).